A 464-amino-acid chain; its full sequence is tRNA-2-methylthio-N(6)-dimethylallyladenosine synthase (464 aa).

Residues 19 to 135 (GSYWITTFGC…LENLLERVDL (117 aa)) enclose the MTTase N-terminal domain. The [4Fe-4S] cluster site is built by Cys-28, Cys-64, Cys-98, Cys-170, Cys-174, and Cys-177. A Radical SAM core domain is found at 156 to 393 (RDSSICGWVN…NELVETTSRK (238 aa)). In terms of domain architecture, TRAM spans 396–464 (QRYLNNIESV…SFSLSGQIYK (69 aa)).

The protein belongs to the methylthiotransferase family. MiaB subfamily. Monomer. [4Fe-4S] cluster serves as cofactor.

Its subcellular location is the cytoplasm. The enzyme catalyses N(6)-dimethylallyladenosine(37) in tRNA + (sulfur carrier)-SH + AH2 + 2 S-adenosyl-L-methionine = 2-methylsulfanyl-N(6)-dimethylallyladenosine(37) in tRNA + (sulfur carrier)-H + 5'-deoxyadenosine + L-methionine + A + S-adenosyl-L-homocysteine + 2 H(+). Functionally, catalyzes the methylthiolation of N6-(dimethylallyl)adenosine (i(6)A), leading to the formation of 2-methylthio-N6-(dimethylallyl)adenosine (ms(2)i(6)A) at position 37 in tRNAs that read codons beginning with uridine. The protein is tRNA-2-methylthio-N(6)-dimethylallyladenosine synthase of Prochlorococcus marinus subsp. pastoris (strain CCMP1986 / NIES-2087 / MED4).